A 252-amino-acid polypeptide reads, in one-letter code: 5'-nucleotidase SurE (252 aa).

Residues Asp8, Asp9, Ser42, and Asn94 each contribute to the a divalent metal cation site.

This sequence belongs to the SurE nucleotidase family. It depends on a divalent metal cation as a cofactor.

It is found in the cytoplasm. It catalyses the reaction a ribonucleoside 5'-phosphate + H2O = a ribonucleoside + phosphate. In terms of biological role, nucleotidase that shows phosphatase activity on nucleoside 5'-monophosphates. This is 5'-nucleotidase SurE from Ehrlichia ruminantium (strain Welgevonden).